We begin with the raw amino-acid sequence, 213 residues long: MVNYPNGRSQSYSAVPKKQKTLTELSVAKKSAPKSKSLVAFGKRGMNFEAEINATNDYYLSRGLAVIHKKPTPIQIVKVDYPQRSRAKITEAYFRQASTTDYSGVYKGHYVDFEAKETHQKTVFPLKNFHEHQIVHMSNVLAQRGIAFVLLHFADLEETYLLPSSYLITFYYEKNGLKSIPLAYIRENGYKIETNHIPRIPYLEIVNKLCEVQ.

Mg(2+) is bound by residues Thr-99, Asp-101, Glu-114, and Gln-133.

It belongs to the RecU family. It depends on Mg(2+) as a cofactor.

It localises to the cytoplasm. It catalyses the reaction Endonucleolytic cleavage at a junction such as a reciprocal single-stranded crossover between two homologous DNA duplexes (Holliday junction).. Its function is as follows. Endonuclease that resolves Holliday junction intermediates in genetic recombination. Cleaves mobile four-strand junctions by introducing symmetrical nicks in paired strands. Promotes annealing of linear ssDNA with homologous dsDNA. Required for DNA repair, homologous recombination and chromosome segregation. This chain is Holliday junction resolvase RecU, found in Lactococcus lactis subsp. cremoris (strain SK11).